The primary structure comprises 1409 residues: Mediator of RNA polymerase II transcription subunit 23 (1409 aa).

Positions 1359 to 1409 are disordered; that stretch reads ASAAGQGPAQGGPQSQQPQTTGQAGGQPSVPQQQQQTQQQQPQQQQQVQQQ.

The protein belongs to the Mediator complex subunit 23 family. In terms of assembly, component of the Mediator complex.

Its subcellular location is the nucleus. Functionally, component of the Mediator complex, a coactivator involved in the regulated transcription of nearly all RNA polymerase II-dependent genes. Mediator functions as a bridge to convey information from gene-specific regulatory proteins to the basal RNA polymerase II transcription machinery. Mediator is recruited to promoters by direct interactions with regulatory proteins and serves as a scaffold for the assembly of a functional preinitiation complex with RNA polymerase II and the general transcription factors. The polypeptide is Mediator of RNA polymerase II transcription subunit 23 (MED23) (Aedes aegypti (Yellowfever mosquito)).